Reading from the N-terminus, the 660-residue chain is Arginine--tRNA ligase, cytoplasmic (660 aa).

At Met1 the chain carries N-acetylmethionine. Residues 1-72 are could be involved in the assembly of the multisynthetase complex; that stretch reads MDGLVAQCSA…QEERRKPTKN (72 aa). L-arginine is bound by residues 200 to 202, His211, Tyr384, Asp388, and Gln412; that span reads SPN. The 'HIGH' region signature appears at 201 to 212; it reads PNIAKEMHVGHL. Residues 529-543 form an interaction with tRNA region; it reads NTAAYLLYAFTRIRS.

It belongs to the class-I aminoacyl-tRNA synthetase family. In terms of assembly, interacts (via N-terminus) with AIMP1 (via N-terminus); this stimulates its catalytic activity. Interacts (via N-terminus) with LARS2 (via C-terminus). Monomer. Part of a multisubunit complex that groups tRNA ligases for Arg (RARS1), Asp (DARS1), Gln (QARS1), Ile (IARS1), Leu (LARS1), Lys (KARS1), Met (MARS1) the bifunctional ligase for Glu and Pro (EPRS1) and the auxiliary subunits AIMP1/p43, AIMP2/p38 and EEF1E1/p18. Interacts with QARS1. Part of a complex composed of RARS1, QARS1 and AIMP1.

It is found in the cytoplasm. The protein resides in the cytosol. The catalysed reaction is tRNA(Arg) + L-arginine + ATP = L-arginyl-tRNA(Arg) + AMP + diphosphate. Forms part of a macromolecular complex that catalyzes the attachment of specific amino acids to cognate tRNAs during protein synthesis. Modulates the secretion of AIMP1 and may be involved in generation of the inflammatory cytokine EMAP2 from AIMP1. The chain is Arginine--tRNA ligase, cytoplasmic (Rars1) from Mus musculus (Mouse).